The chain runs to 204 residues: GTP cyclohydrolase 1 (204 aa).

Positions 93, 96, and 164 each coordinate Zn(2+).

The protein belongs to the GTP cyclohydrolase I family. In terms of assembly, toroid-shaped homodecamer, composed of two pentamers of five dimers.

It carries out the reaction GTP + H2O = 7,8-dihydroneopterin 3'-triphosphate + formate + H(+). It participates in cofactor biosynthesis; 7,8-dihydroneopterin triphosphate biosynthesis; 7,8-dihydroneopterin triphosphate from GTP: step 1/1. The sequence is that of GTP cyclohydrolase 1 from Rhizobium meliloti (strain 1021) (Ensifer meliloti).